A 202-amino-acid chain; its full sequence is Small ribosomal subunit protein uS4c (202 aa).

The region spanning 90-153 (MRLDNVIFRL…KSETIISKNI (64 aa)) is the S4 RNA-binding domain.

Belongs to the universal ribosomal protein uS4 family. As to quaternary structure, part of the 30S ribosomal subunit. Contacts protein S5. The interaction surface between S4 and S5 is involved in control of translational fidelity.

It is found in the plastid. Its subcellular location is the chloroplast. One of the primary rRNA binding proteins, it binds directly to 16S rRNA where it nucleates assembly of the body of the 30S subunit. Functionally, with S5 and S12 plays an important role in translational accuracy. The polypeptide is Small ribosomal subunit protein uS4c (rps4) (Hylocomium splendens (Glittering wood-moss)).